Consider the following 342-residue polypeptide: EIYNKDGNKLDLSGKVDGLHYFSNDDSADGDQSYMRLGFRGETQINNELTGYGEWEYQASLNTAESEDANNFTRVGFAGLKFGQWGSLDYGRNYGVMYDLAAWTDVLPEFGGDTYGADNFMFQRANGVLTYRNKDFFGLVDGLDVAVQYQGKNGSATESTMGRDVLRQNGDGYGMSLTYDLGEGFSAAGAMMASTRTSEQNGRQNPAIIGNGDRAETYTGGLKYXANNIYLAAVFTQTYNARIGVSSDSSHLGYADNAQNFEAVAQYQFDFGLRPSIAYVQSHARNVPGYSNQNLTKYVDVGASYFFNKNMLTYVDYKINLMDDTRLTRDAGINTDDIVAVG.

The protein belongs to the Gram-negative porin family. Homotrimer.

The protein resides in the cell outer membrane. In terms of biological role, forms pores that allow passive diffusion of small molecules across the outer membrane. In R.aquatilis OmpC is involved in the adhesion to wheat roots. In Rahnella aquatilis, this protein is Outer membrane porin C (ompC).